The chain runs to 111 residues: Thioredoxin 2 (111 aa).

Residues 2-109 (SKGVITITDA…LLSFLDTHLN (108 aa)) form the Thioredoxin domain. C33 and C36 are disulfide-bonded.

Belongs to the thioredoxin family.

Functionally, participates in various redox reactions through the reversible oxidation of its active center dithiol to a disulfide and catalyzes dithiol-disulfide exchange reactions. This chain is Thioredoxin 2 (trxB), found in Nostoc sp. (strain PCC 7120 / SAG 25.82 / UTEX 2576).